Consider the following 209-residue polypeptide: dITP/XTP pyrophosphatase (209 aa).

Position 7 to 12 (7 to 12) interacts with substrate; it reads SSHGYK. Asp-70 acts as the Proton acceptor in catalysis. Asp-70 contacts Mg(2+). Residues Ser-71, 154 to 157, Lys-177, and 182 to 183 each bind substrate; these read FGYD and HR.

This sequence belongs to the HAM1 NTPase family. As to quaternary structure, homodimer. It depends on Mg(2+) as a cofactor.

It catalyses the reaction XTP + H2O = XMP + diphosphate + H(+). The catalysed reaction is dITP + H2O = dIMP + diphosphate + H(+). The enzyme catalyses ITP + H2O = IMP + diphosphate + H(+). Pyrophosphatase that catalyzes the hydrolysis of nucleoside triphosphates to their monophosphate derivatives, with a high preference for the non-canonical purine nucleotides XTP (xanthosine triphosphate), dITP (deoxyinosine triphosphate) and ITP. Seems to function as a house-cleaning enzyme that removes non-canonical purine nucleotides from the nucleotide pool, thus preventing their incorporation into DNA/RNA and avoiding chromosomal lesions. The polypeptide is dITP/XTP pyrophosphatase (Chlamydia muridarum (strain MoPn / Nigg)).